The sequence spans 66 residues: MKTSALFVIFGLVLLFCNSFAAELKTTGRGCGGLMAGCGGKSTFCCSGYNCSPTWKWCVYARPGRR.

Residues 1-21 (MKTSALFVIFGLVLLFCNSFA) form the signal peptide. Positions 22-29 (AELKTTGR) are excised as a propeptide. 3 disulfide bridges follow: Cys-31/Cys-46, Cys-38/Cys-51, and Cys-45/Cys-58.

Belongs to the neurotoxin 10 (Hwtx-1) family. 46 (Jztx-7/10/12) subfamily. As to expression, expressed by the venom gland.

It localises to the secreted. Its function is as follows. Probable ion channel inhibitor. This chain is U1-theraphotoxin-Cg1b, found in Chilobrachys guangxiensis (Chinese earth tiger tarantula).